Reading from the N-terminus, the 314-residue chain is 2,3-dihydroxyphenylpropionate/2,3-dihydroxicinnamic acid 1,2-dioxygenase (314 aa).

The active-site Proton donor is His115. His179 serves as the catalytic Proton acceptor.

Belongs to the LigB/MhpB extradiol dioxygenase family. In terms of assembly, homotetramer. The cofactor is Fe(2+).

The enzyme catalyses 3-(2,3-dihydroxyphenyl)propanoate + O2 = (2Z,4E)-2-hydroxy-6-oxonona-2,4-dienedioate + H(+). The catalysed reaction is (2E)-3-(2,3-dihydroxyphenyl)prop-2-enoate + O2 = (2Z,4E,7E)-2-hydroxy-6-oxonona-2,4,7-trienedioate + H(+). It participates in aromatic compound metabolism; 3-phenylpropanoate degradation. In terms of biological role, catalyzes the non-heme iron(II)-dependent oxidative cleavage of 2,3-dihydroxyphenylpropionic acid and 2,3-dihydroxicinnamic acid into 2-hydroxy-6-ketononadienedioate and 2-hydroxy-6-ketononatrienedioate, respectively. In Klebsiella pneumoniae (strain 342), this protein is 2,3-dihydroxyphenylpropionate/2,3-dihydroxicinnamic acid 1,2-dioxygenase.